The chain runs to 200 residues: Peptidyl-tRNA hydrolase (200 aa).

Residue Tyr-15 participates in tRNA binding. The active-site Proton acceptor is the His-20. Residues Phe-66, Asn-68, and Asn-114 each contribute to the tRNA site.

It belongs to the PTH family. In terms of assembly, monomer.

The protein localises to the cytoplasm. It carries out the reaction an N-acyl-L-alpha-aminoacyl-tRNA + H2O = an N-acyl-L-amino acid + a tRNA + H(+). Hydrolyzes ribosome-free peptidyl-tRNAs (with 1 or more amino acids incorporated), which drop off the ribosome during protein synthesis, or as a result of ribosome stalling. Its function is as follows. Catalyzes the release of premature peptidyl moieties from peptidyl-tRNA molecules trapped in stalled 50S ribosomal subunits, and thus maintains levels of free tRNAs and 50S ribosomes. The protein is Peptidyl-tRNA hydrolase of Ralstonia pickettii (strain 12J).